The chain runs to 220 residues: Fructose-6-phosphate aldolase 2 (220 aa).

K85 serves as the catalytic Schiff-base intermediate with substrate.

The protein belongs to the transaldolase family. Type 3A subfamily. As to quaternary structure, homodecamer.

The protein resides in the cytoplasm. The enzyme catalyses beta-D-fructose 6-phosphate = dihydroxyacetone + D-glyceraldehyde 3-phosphate. Its function is as follows. Catalyzes the reversible formation of fructose 6-phosphate from dihydroxyacetone and D-glyceraldehyde 3-phosphate via an aldolization reaction. Can utilize hydroxyacetone as an alternative donor substrate. Is also able to catalyze the direct self-aldol addition of glycolaldehyde. Is less catalytically efficient than the isozyme FsaA. Does not display transaldolase activity. The sequence is that of Fructose-6-phosphate aldolase 2 (fsaB) from Escherichia coli (strain K12).